The sequence spans 288 residues: uncharacterized protein (288 aa).

Positions 1–12 are enriched in basic and acidic residues; sequence MTEGRCAQHPDG. Residues 1-20 form a disordered region; it reads MTEGRCAQHPDGLDVQDVCD.

Belongs to the class IV-like SAM-binding methyltransferase superfamily. RNA methyltransferase TrmH family.

This is an uncharacterized protein from Mycobacterium tuberculosis (strain ATCC 25618 / H37Rv).